Here is a 436-residue protein sequence, read N- to C-terminus: GTPase Der (436 aa).

2 EngA-type G domains span residues Pro4–His167 and Ile176–Ala351. GTP is bound by residues Gly10–Ser17, Asp57–Ile61, Asn119–Asp122, Gly182–Ser189, Asp229–Met233, and Asn294–Asp297. Residues Met352 to Lys436 form the KH-like domain.

It belongs to the TRAFAC class TrmE-Era-EngA-EngB-Septin-like GTPase superfamily. EngA (Der) GTPase family. Associates with the 50S ribosomal subunit.

Functionally, GTPase that plays an essential role in the late steps of ribosome biogenesis. This chain is GTPase Der, found in Geobacillus thermodenitrificans (strain NG80-2).